The sequence spans 462 residues: Argininosuccinate lyase (462 aa).

The protein belongs to the lyase 1 family. Argininosuccinate lyase subfamily.

The protein resides in the cytoplasm. It carries out the reaction 2-(N(omega)-L-arginino)succinate = fumarate + L-arginine. The protein operates within amino-acid biosynthesis; L-arginine biosynthesis; L-arginine from L-ornithine and carbamoyl phosphate: step 3/3. The sequence is that of Argininosuccinate lyase from Caldicellulosiruptor bescii (strain ATCC BAA-1888 / DSM 6725 / KCTC 15123 / Z-1320) (Anaerocellum thermophilum).